A 90-amino-acid polypeptide reads, in one-letter code: UPF0335 protein bsl7135 (90 aa).

This sequence belongs to the UPF0335 family.

This Bradyrhizobium diazoefficiens (strain JCM 10833 / BCRC 13528 / IAM 13628 / NBRC 14792 / USDA 110) protein is UPF0335 protein bsl7135.